A 675-amino-acid polypeptide reads, in one-letter code: Probable potassium transport system protein Kup (675 aa).

Transmembrane regions (helical) follow at residues 12–32 (LGML…PLYV), 55–75 (VSLI…LVAL), 98–118 (WLIF…TLTP), 143–163 (WLVP…QVLG), 170–190 (SFGP…LLNI), 216–236 (MGIF…ALYS), 249–269 (TWPF…AWML), 296–316 (IAMI…LITG), 345–365 (IYIG…VWLF), 374–394 (AYGL…SQWV), 401–421 (FWSL…LVAS), and 428–448 (GGYL…VWFF).

The protein belongs to the HAK/KUP transporter (TC 2.A.72) family.

Its subcellular location is the cell membrane. The enzyme catalyses K(+)(in) + H(+)(in) = K(+)(out) + H(+)(out). In terms of biological role, transport of potassium into the cell. Likely operates as a K(+):H(+) symporter. The sequence is that of Probable potassium transport system protein Kup from Levilactobacillus brevis (strain ATCC 367 / BCRC 12310 / CIP 105137 / JCM 1170 / LMG 11437 / NCIMB 947 / NCTC 947) (Lactobacillus brevis).